A 521-amino-acid chain; its full sequence is Vang-like protein 2-A (521 aa).

The interval 1 to 81 (MDNDSQYSGY…TTVVTGTSEH (81 aa)) is disordered. Residues 1-108 (MDNDSQYSGY…AKLDCSRHLG (108 aa)) lie on the Cytoplasmic side of the membrane. Residues 15-33 (GHSRSSRKHRDRRERHRSK) show a composition bias toward basic residues. Residues 57–67 (ESTRGEDRDDN) show a composition bias toward basic and acidic residues. Residues 69–81 (GETTTVVTGTSEH) show a composition bias toward low complexity. A helical transmembrane segment spans residues 109–129 (VVIGGALALLSFLTPIAFMLL). Topologically, residues 130–147 (PQILWREDLEQCGTACEG) are extracellular. The helical transmembrane segment at 148–168 (LFISVAFKLLILLLGSWALFF) threads the bilayer. Over 169–178 (RRPKAFFPRV) the chain is Cytoplasmic. The helical transmembrane segment at 179–199 (FVFRALLMVLVFLLVVSYWLF) threads the bilayer. At 200-218 (YGVRILESRDKNYQGIVQY) the chain is on the extracellular side. Residues 219–239 (AVSLVDALLFVHYLAVVLLEL) form a helical membrane-spanning segment. The Cytoplasmic portion of the chain corresponds to 240–521 (RQLQPQFTIK…VMRLQSETSV (282 aa)). Residues 518-521 (ETSV) carry the PDZ-binding motif.

It belongs to the Vang family. Interacts with dvl/dsh. Interacts with prickle3. As to expression, during gastrulation, broadly expressed throughout the marginal zone and animal cap region. From the neurula stages, expression becomes concentrated in neural tissues, in the neural plate and neural tube.

Its subcellular location is the cell membrane. Functionally, has a role in non-canonical Wnt/planar cell polarity (PCP) signaling; can recruit dvl/dsh and prickle from the cytoplasm to the plasma membrane. Acts in a PCP complex to regulate the polarized assembly of fibronectrin on the surface of the mesoderm during gastrulation. Regulates convergent extension cell movements in both dorsal mesoderm and neural tissue during gastrulation, without affecting cell fate. Regulates neural fold closure during neurulation. May be required for cell surface localization of fzd3 and fzd6 in the inner ear. The sequence is that of Vang-like protein 2-A (vangl2-a) from Xenopus laevis (African clawed frog).